Reading from the N-terminus, the 286-residue chain is Alpha-ketoglutarate-dependent dioxygenase alkB homolog 3 (286 aa).

The interval 1–38 is disordered; that stretch reads MEDKRRRARVQGAWAGPAKSQATAQPAPTAENNLQQRP. Residues 20–36 are compositionally biased toward polar residues; the sequence is SQATAQPAPTAENNLQQ. Residues tryptophan 115 and 141–143 each bind substrate; that span reads YTY. Residues 172-278 enclose the Fe2OG dioxygenase domain; it reads SFNSLLCNLY…RINLTFRTVY (107 aa). A (4R)-5-hydroxyleucine; alternate modification is found at leucine 177. Leucine 177 bears the (4R)-5-oxoleucine; alternate mark. Residue 179 to 181 coordinates 2-oxoglutarate; sequence NLY. Residues histidine 191 and aspartate 193 each contribute to the Fe cation site. Residue aspartate 194 participates in substrate binding. Histidine 257 serves as a coordination point for Fe cation. Residues 269 to 275 and arginine 275 contribute to the 2-oxoglutarate site; that span reads RINLTFR.

Belongs to the alkB family. As to quaternary structure, interacts with the ASCC complex composed of ASCC1, ASCC2 and ASCC3. Interacts directly with ASCC3, and is thereby recruited to the ASCC complex. Interacts with OTUD4; the interaction is direct. Interacts with USP7 and USP9X. Fe(2+) serves as cofactor. Post-translationally, ubiquitinated; undergoes 'Lys-48'-linked polyubiquitination. OTUD4 promotes USP7 and USP9X-dependent deubiquitination of 'Lys-48'-polyubiquitinated ALKBH3 promoting the repair of alkylated DNA lesions.

It is found in the nucleus. Its subcellular location is the cytoplasm. The enzyme catalyses an N(1)-methyladenosine in mRNA + 2-oxoglutarate + O2 = an adenosine in mRNA + formaldehyde + succinate + CO2. It catalyses the reaction a methylated nucleobase within DNA + 2-oxoglutarate + O2 = a nucleobase within DNA + formaldehyde + succinate + CO2. It carries out the reaction an N(1)-methyl-2'-deoxyadenosine in single-stranded DNA + 2-oxoglutarate + O2 = a 2'-deoxyadenosine in single-stranded DNA + formaldehyde + succinate + CO2 + H(+). The catalysed reaction is an N(3)-methyl-2'-deoxycytidine in single-stranded DNA + 2-oxoglutarate + O2 = a 2'-deoxycytidine in single-stranded DNA + formaldehyde + succinate + CO2 + H(+). The enzyme catalyses a 3,N(4)-etheno-2'-deoxycytidine in single-stranded DNA + 2-oxoglutarate + O2 + H2O = a 2'-deoxycytidine in single-stranded DNA + glyoxal + succinate + CO2. Activated by ascorbate. Functionally, dioxygenase that mediates demethylation of DNA and RNA containing 1-methyladenosine (m1A). Repairs alkylated DNA containing 1-methyladenosine (m1A) and 3-methylcytosine (m3C) by oxidative demethylation. Has a strong preference for single-stranded DNA. Able to process alkylated m3C within double-stranded regions via its interaction with ASCC3, which promotes DNA unwinding to generate single-stranded substrate needed for ALKBH3. Can repair exocyclic 3,N4-ethenocytosine adducs in single-stranded DNA. Also acts on RNA. Demethylates N(1)-methyladenosine (m1A) RNA, an epigenetic internal modification of messenger RNAs (mRNAs) highly enriched within 5'-untranslated regions (UTRs) and in the vicinity of start codons. Requires molecular oxygen, alpha-ketoglutarate and iron. This Bos taurus (Bovine) protein is Alpha-ketoglutarate-dependent dioxygenase alkB homolog 3.